A 540-amino-acid chain; its full sequence is Phosphoenolpyruvate carboxykinase (ATP) (540 aa).

R65 contacts substrate. The residue at position 87 (K87) is an N6-acetyllysine. Residues Y207 and K213 each contribute to the substrate site. ATP is bound by residues K213, H232, and 248–256 (GLSGTGKTT). Positions 213 and 232 each coordinate Mn(2+). D269 is a binding site for Mn(2+). ATP is bound by residues E297, R333, 449–450 (RI), and T455. Position 333 (R333) interacts with substrate. K523 is subject to N6-acetyllysine.

This sequence belongs to the phosphoenolpyruvate carboxykinase (ATP) family. In terms of assembly, monomer. It depends on Mn(2+) as a cofactor.

Its subcellular location is the cytoplasm. It catalyses the reaction oxaloacetate + ATP = phosphoenolpyruvate + ADP + CO2. It participates in carbohydrate biosynthesis; gluconeogenesis. Functionally, involved in the gluconeogenesis. Catalyzes the conversion of oxaloacetate (OAA) to phosphoenolpyruvate (PEP) through direct phosphoryl transfer between the nucleoside triphosphate and OAA. This is Phosphoenolpyruvate carboxykinase (ATP) from Escherichia coli O127:H6 (strain E2348/69 / EPEC).